The primary structure comprises 301 residues: uncharacterized protein (301 aa).

Catalysis depends on charge relay system residues Ser44 and Tyr107. The active-site Proton donor is Tyr133. Catalysis depends on Lys162, which acts as the Schiff-base intermediate with substrate.

It belongs to the DapA family. Homotetramer.

Its subcellular location is the cytoplasm. This is an uncharacterized protein from Pyrobaculum arsenaticum (strain DSM 13514 / JCM 11321 / PZ6).